Here is a 463-residue protein sequence, read N- to C-terminus: Probable Xaa-Pro aminopeptidase PEPP (463 aa).

Positions 259, 270, 393, and 433 each coordinate Mn(2+).

It belongs to the peptidase M24B family. Mn(2+) is required as a cofactor.

It carries out the reaction Release of any N-terminal amino acid, including proline, that is linked to proline, even from a dipeptide or tripeptide.. Functionally, catalyzes the removal of a penultimate prolyl residue from the N-termini of peptides. The chain is Probable Xaa-Pro aminopeptidase PEPP (PEPP) from Phaeosphaeria nodorum (strain SN15 / ATCC MYA-4574 / FGSC 10173) (Glume blotch fungus).